The chain runs to 283 residues: RNase adapter protein RapZ (283 aa).

8-15 (GRSGSGKS) lines the ATP pocket. Residue 56–59 (DVRN) participates in GTP binding. The tract at residues 266–283 (RSRGKNVQSRHRTLEKRK) is RNA-binding.

This sequence belongs to the RapZ-like family. RapZ subfamily. As to quaternary structure, homotrimer.

In terms of biological role, modulates the synthesis of GlmS, by affecting the processing and stability of the regulatory small RNA GlmZ. When glucosamine-6-phosphate (GlcN6P) concentrations are high in the cell, RapZ binds GlmZ and targets it to cleavage by RNase E. Consequently, GlmZ is inactivated and unable to activate GlmS synthesis. Under low GlcN6P concentrations, RapZ is sequestered and inactivated by an other regulatory small RNA, GlmY, preventing GlmZ degradation and leading to synthesis of GlmS. This Photorhabdus laumondii subsp. laumondii (strain DSM 15139 / CIP 105565 / TT01) (Photorhabdus luminescens subsp. laumondii) protein is RNase adapter protein RapZ.